A 391-amino-acid polypeptide reads, in one-letter code: Serine protease 7 (391 aa).

The N-terminal stretch at 1–27 is a signal peptide; sequence MKSTRKVVGIFLATCLLPFTVLQNVAA. A propeptide spans 28–136 (activation peptide); the sequence is QGSCRNPNQK…KCGPHSFSNK (109 aa). The Clip domain maps to 30–84; sequence SCRNPNQKQGQCLSIYDCQSLLSVIQQSYVSPEDRTFLRNSQCLDGVGRQPYVCC. 3 disulfides stabilise this stretch: C31–C83, C41–C72, and C47–C84. A disordered region spans residues 91–121; it reads GSQEATSAAPPPTTTSSSSRGQDGQAGLGNL. 5 cysteine pairs are disulfide-bonded: C128-C264, C167-C183, C211-C216, C310-C327, and C337-C366. The region spanning 137 to 390 is the Peptidase S1 domain; the sequence is VYNGNDTAID…YMDWIVETIR (254 aa). A glycan (N-linked (GlcNAc...) asparagine) is linked at N141. Catalysis depends on H182, which acts as the Charge relay system. Ca(2+)-binding residues include E202, D204, K207, and D210. The active-site Charge relay system is the D244. S341 acts as the Charge relay system in catalysis.

It belongs to the peptidase S1 family. CLIP subfamily. As to quaternary structure, interacts with Spn27A.

It localises to the secreted. Serine protease that, by cleaving and activating prophenoloxidase (PPO1) after immune challenge, plays an essential role in the melanization immune response to septic wounding. May function in diverse Hayan-dependent PPO1-activating cascades that are negatively controlled by different serpin proteins; Spn27A in the hemolymph and Spn77BA in the trachea. Important for the innate immune response to fungi. Regulation of melanization and PPO1 activation appears to be largely independent of the Toll signaling pathway. This Drosophila melanogaster (Fruit fly) protein is Serine protease 7.